We begin with the raw amino-acid sequence, 196 residues long: MAYKTEHITQQLRAAREAQKMSQRELSARSGLTQSHISQIERGTMEPGLGSLVDVARALDLEIVLAPKKLMPAIRNILDSASASSDVLTSDQRKLVGRLERWFAQHRGGFGSASEADTFKDSLALLRHLPLSAEEMDTFNEATARLDRSQADPPSRQELSRIAHAVRHLRNAAVHRDRDDAVPRSAYALDEEDDNA.

Residues 12–66 form the HTH cro/C1-type domain; it reads LRAAREAQKMSQRELSARSGLTQSHISQIERGTMEPGLGSLVDVARALDLEIVLA. The segment at residues 23 to 42 is a DNA-binding region (H-T-H motif); it reads QRELSARSGLTQSHISQIER. The disordered stretch occupies residues 174–196; that stretch reads VHRDRDDAVPRSAYALDEEDDNA.

This is an uncharacterized protein from Sinorhizobium fredii (strain NBRC 101917 / NGR234).